A 136-amino-acid polypeptide reads, in one-letter code: Magnetite biomineralization protein Mms6 (136 aa).

The Cytoplasmic segment spans residues 1-85 (MGEMEREGAT…AVGGTIWSGK (85 aa)). Positions 86–95 (GLALGLGMGL) are GL repeat. Residues 86–106 (GLALGLGMGLGAWGPLILGVV) form a helical membrane-spanning segment. The Lumenal segment spans residues 107 to 136 (GAGAVYAYMKSRDIEAAQSDEEVELRDALS). The interval 115–136 (MKSRDIEAAQSDEEVELRDALS) is MIC, self-assembles, binds magnetite, Fe(2+) and Fe(3+).

Belongs to the magnetosome Mms6 family. As to quaternary structure, full length protein oligomerizes and interacts with MamA. Post-translationally, may undergo cleavage.

The protein localises to the magnetosome membrane. Its function is as follows. Promotes the formation of magnetite in Fe(2+)-rich conditions, when magnetite is not readily formed. Binds both Fe(2+) and Fe(3+). May help control the production of crystals with a specific morphology. May function with MamX, MamY amd MamZ in biomineralization. The 4 genes of this operon collectively influence magnetosome size and number. The polypeptide is Magnetite biomineralization protein Mms6 (Magnetospirillum gryphiswaldense (strain DSM 6361 / JCM 21280 / NBRC 15271 / MSR-1)).